The following is a 396-amino-acid chain: Phosphoglycerate kinase (396 aa).

Residues 21–23 (DFN), arginine 36, 59–62 (HLGK), arginine 119, and arginine 156 contribute to the substrate site. Residues lysine 206, glutamate 325, and 352 to 355 (GGDS) contribute to the ATP site.

The protein belongs to the phosphoglycerate kinase family. Monomer.

The protein localises to the cytoplasm. The catalysed reaction is (2R)-3-phosphoglycerate + ATP = (2R)-3-phospho-glyceroyl phosphate + ADP. Its pathway is carbohydrate degradation; glycolysis; pyruvate from D-glyceraldehyde 3-phosphate: step 2/5. This chain is Phosphoglycerate kinase, found in Staphylococcus haemolyticus (strain JCSC1435).